Here is a 179-residue protein sequence, read N- to C-terminus: Large ribosomal subunit protein uL5 (179 aa).

Belongs to the universal ribosomal protein uL5 family. As to quaternary structure, part of the 50S ribosomal subunit; part of the 5S rRNA/L5/L18/L25 subcomplex. Contacts the 5S rRNA and the P site tRNA. Forms a bridge to the 30S subunit in the 70S ribosome.

Functionally, this is one of the proteins that bind and probably mediate the attachment of the 5S RNA into the large ribosomal subunit, where it forms part of the central protuberance. In the 70S ribosome it contacts protein S13 of the 30S subunit (bridge B1b), connecting the 2 subunits; this bridge is implicated in subunit movement. Contacts the P site tRNA; the 5S rRNA and some of its associated proteins might help stabilize positioning of ribosome-bound tRNAs. The polypeptide is Large ribosomal subunit protein uL5 (Dehalococcoides mccartyi (strain ATCC BAA-2100 / JCM 16839 / KCTC 5957 / BAV1)).